The sequence spans 71 residues: Translation initiation factor IF-1 (71 aa).

The 71-residue stretch at Met1–His71 folds into the S1-like domain.

The protein belongs to the IF-1 family. Component of the 30S ribosomal translation pre-initiation complex which assembles on the 30S ribosome in the order IF-2 and IF-3, IF-1 and N-formylmethionyl-tRNA(fMet); mRNA recruitment can occur at any time during PIC assembly.

The protein resides in the cytoplasm. Its function is as follows. One of the essential components for the initiation of protein synthesis. Stabilizes the binding of IF-2 and IF-3 on the 30S subunit to which N-formylmethionyl-tRNA(fMet) subsequently binds. Helps modulate mRNA selection, yielding the 30S pre-initiation complex (PIC). Upon addition of the 50S ribosomal subunit IF-1, IF-2 and IF-3 are released leaving the mature 70S translation initiation complex. The sequence is that of Translation initiation factor IF-1 from Rickettsia prowazekii (strain Madrid E).